A 388-amino-acid chain; its full sequence is Alanine racemase, catabolic (388 aa).

Catalysis depends on lysine 46, which acts as the Proton acceptor; specific for D-alanine. The residue at position 46 (lysine 46) is an N6-(pyridoxal phosphate)lysine. Arginine 145 is a binding site for substrate. Tyrosine 267 (proton acceptor; specific for L-alanine) is an active-site residue. Residue methionine 315 coordinates substrate.

It belongs to the alanine racemase family. Pyridoxal 5'-phosphate serves as cofactor.

It carries out the reaction L-alanine = D-alanine. In terms of biological role, isomerizes L-alanine to D-alanine which is then oxidized to pyruvate by DadA. This Agrobacterium fabrum (strain C58 / ATCC 33970) (Agrobacterium tumefaciens (strain C58)) protein is Alanine racemase, catabolic (dadB).